Consider the following 113-residue polypeptide: Ig kappa chain V-II region 7S34.1 (113 aa).

Residues 1–23 (DIVMTQTAPSALVTPGESVSISC) are framework-1. Cys23 and Cys93 are joined by a disulfide. The complementarity-determining-1 stretch occupies residues 24-39 (RSSKSLLHSNGNTYLY). Residues 40–54 (WFLQRPGQCPQLLIY) form a framework-2 region. A complementarity-determining-2 region spans residues 55-61 (RMSNLAS). The interval 62-93 (GVPDRFSGSGSGTAFTLRISRVEAEDVGVYYC) is framework-3. Residues 94-102 (MQQREYPYT) form a complementarity-determining-3 region. The segment at 103 to 112 (FGGGTKLEIK) is framework-4.

This is Ig kappa chain V-II region 7S34.1 from Mus musculus (Mouse).